We begin with the raw amino-acid sequence, 99 residues long: ATP synthase subunit c (99 aa).

Transmembrane regions (helical) follow at residues 23–43 (GAGIGYGLVAVGAGLAMIGAL) and 78–98 (MGIAETAAIYSLIIAILLIFV).

The protein belongs to the ATPase C chain family. As to quaternary structure, F-type ATPases have 2 components, F(1) - the catalytic core - and F(0) - the membrane proton channel. F(1) has five subunits: alpha(3), beta(3), gamma(1), delta(1), epsilon(1). F(0) has three main subunits: a(1), b(2) and c(10-14). The alpha and beta chains form an alternating ring which encloses part of the gamma chain. F(1) is attached to F(0) by a central stalk formed by the gamma and epsilon chains, while a peripheral stalk is formed by the delta and b chains.

It is found in the cell membrane. Its function is as follows. F(1)F(0) ATP synthase produces ATP from ADP in the presence of a proton or sodium gradient. F-type ATPases consist of two structural domains, F(1) containing the extramembraneous catalytic core and F(0) containing the membrane proton channel, linked together by a central stalk and a peripheral stalk. During catalysis, ATP synthesis in the catalytic domain of F(1) is coupled via a rotary mechanism of the central stalk subunits to proton translocation. Functionally, key component of the F(0) channel; it plays a direct role in translocation across the membrane. A homomeric c-ring of between 10-14 subunits forms the central stalk rotor element with the F(1) delta and epsilon subunits. This is ATP synthase subunit c from Mycoplasma mobile (strain ATCC 43663 / 163K / NCTC 11711) (Mesomycoplasma mobile).